The sequence spans 91 residues: Cell division topological specificity factor (91 aa).

The protein belongs to the MinE family.

In terms of biological role, prevents the cell division inhibition by proteins MinC and MinD at internal division sites while permitting inhibition at polar sites. This ensures cell division at the proper site by restricting the formation of a division septum at the midpoint of the long axis of the cell. This Gloeobacter violaceus (strain ATCC 29082 / PCC 7421) protein is Cell division topological specificity factor.